A 44-amino-acid chain; its full sequence is Photosystem I reaction center subunit IX (44 aa).

Residues 7–27 form a helical membrane-spanning segment; that stretch reads YLSVAPVISTLWFGSLAGLLI.

The protein belongs to the PsaJ family.

The protein localises to the plastid. It localises to the chloroplast thylakoid membrane. May help in the organization of the PsaE and PsaF subunits. The chain is Photosystem I reaction center subunit IX from Ceratophyllum demersum (Rigid hornwort).